Here is a 645-residue protein sequence, read N- to C-terminus: Mediator of RNA polymerase II transcription subunit 17 (645 aa).

The interval 215-234 (KAEDEESGSPPASPSGSGAA) is disordered. Over residues 222–234 (GSPPASPSGSGAA) the composition is skewed to low complexity.

This sequence belongs to the Mediator complex subunit 17 family. Component of the Mediator complex.

The protein resides in the nucleus. Functionally, component of the Mediator complex, a coactivator involved in the regulated transcription of nearly all RNA polymerase II-dependent genes. Mediator functions as a bridge to convey information from gene-specific regulatory proteins to the basal RNA polymerase II transcription machinery. Mediator is recruited to promoters by direct interactions with regulatory proteins and serves as a scaffold for the assembly of a functional preinitiation complex with RNA polymerase II and the general transcription factors. This Anopheles gambiae (African malaria mosquito) protein is Mediator of RNA polymerase II transcription subunit 17 (MED17).